The primary structure comprises 366 residues: Reticulon-4-interacting protein 1, mitochondrial (366 aa).

Residues 1 to 20 constitute a mitochondrion transit peptide; the sequence is MIEKMILRRFFSTKSSTMRA.

This sequence belongs to the zinc-containing alcohol dehydrogenase family. Quinone oxidoreductase subfamily. In terms of tissue distribution, expressed in pharynx, muscles and intestine.

It localises to the mitochondrion. Functionally, plays a role in oxygen metabolism in the mitochondria by regulating the levels of reactive oxygen species (ROS) thereby conferring resistance to oxidative stress. Involved in resistance to P.aeruginosa PA14 infection. Regulates lifespan. This chain is Reticulon-4-interacting protein 1, mitochondrial, found in Caenorhabditis elegans.